Reading from the N-terminus, the 86-residue chain is Large ribosomal subunit protein bL31B (86 aa).

It belongs to the bacterial ribosomal protein bL31 family. Type B subfamily. In terms of assembly, part of the 50S ribosomal subunit.

This chain is Large ribosomal subunit protein bL31B, found in Vibrio vulnificus (strain CMCP6).